The chain runs to 506 residues: Protein MGF 505-9R (506 aa).

This sequence belongs to the asfivirus MGF 505 family.

Plays a role in virus cell tropism, and may be required for efficient virus replication in macrophages. This African swine fever virus (isolate Tick/South Africa/Pretoriuskop Pr4/1996) (ASFV) protein is Protein MGF 505-9R.